The following is a 255-amino-acid chain: MLRVENLSIRRGGKTVLEGLELELRPGEMLGVLGPNGAGKSTLLGALCGELEPAEGLVLLDERGLDDWPGVARAQRLAVLPQSSSLGFAFPVEAVVGFGRLPHSSGRERDVQIVAEALAAADASHLAGRSYLALSGGERQRVHLARVLAQLWPGEPGQVLLLDEPTSALDPLHQHTTLQAVHDFARRGASVLVILHDLNLAARYCDRLLLLQNGRPHLLGTPEEVLRPEPLRAVFGLEVLVQRHPERGHPLIVAR.

Residues 2 to 238 (LRVENLSIRR…EPLRAVFGLE (237 aa)) form the ABC transporter domain. 34–41 (GPNGAGKS) is an ATP binding site.

This sequence belongs to the ABC transporter superfamily. Heme (hemin) importer (TC 3.A.1.14.5) family. In terms of assembly, the complex is composed of two ATP-binding proteins (HmuV), two transmembrane proteins (HmuU) and a solute-binding protein (HmuT).

It localises to the cell inner membrane. In terms of biological role, part of the ABC transporter complex HmuTUV involved in hemin import. Responsible for energy coupling to the transport system. This chain is Hemin import ATP-binding protein HmuV, found in Pseudomonas aeruginosa (strain ATCC 15692 / DSM 22644 / CIP 104116 / JCM 14847 / LMG 12228 / 1C / PRS 101 / PAO1).